A 139-amino-acid polypeptide reads, in one-letter code: MRKPTETAGPSQRQQRVAELVRHAIAEVLSRGDLQDPVLSRHVITVPEVRMSPDLKLATAYVMPLGGQDEAPVLEALERNRKALRQEVARRVNLKFAPELRFRRDETFDEAARIDRLLRSEKVQRDLGGEQDDAGDPDA.

Belongs to the RbfA family. In terms of assembly, monomer. Binds 30S ribosomal subunits, but not 50S ribosomal subunits or 70S ribosomes.

It localises to the cytoplasm. In terms of biological role, one of several proteins that assist in the late maturation steps of the functional core of the 30S ribosomal subunit. Associates with free 30S ribosomal subunits (but not with 30S subunits that are part of 70S ribosomes or polysomes). Required for efficient processing of 16S rRNA. May interact with the 5'-terminal helix region of 16S rRNA. The sequence is that of Ribosome-binding factor A from Methylobacterium sp. (strain 4-46).